A 96-amino-acid chain; its full sequence is uncharacterized protein (96 aa).

This is an uncharacterized protein from Invertebrate iridescent virus 6 (IIV-6).